A 192-amino-acid chain; its full sequence is Peptide deformylase 1 (192 aa).

The Fe cation site is built by cysteine 101 and histidine 143. Residue glutamate 144 is part of the active site. Histidine 147 serves as a coordination point for Fe cation.

It belongs to the polypeptide deformylase family. The cofactor is Fe(2+).

The enzyme catalyses N-terminal N-formyl-L-methionyl-[peptide] + H2O = N-terminal L-methionyl-[peptide] + formate. Removes the formyl group from the N-terminal Met of newly synthesized proteins. Requires at least a dipeptide for an efficient rate of reaction. N-terminal L-methionine is a prerequisite for activity but the enzyme has broad specificity at other positions. The polypeptide is Peptide deformylase 1 (Prochlorococcus marinus (strain MIT 9313)).